The following is a 765-amino-acid chain: E3 ubiquitin-protein ligase SlrP (765 aa).

An interaction with target proteins region spans residues methionine 1–methionine 453. LRR repeat units lie at residues glutamine 200–glutamine 219, asparagine 221–threonine 242, isoleucine 243–serine 262, alanine 263–glutamate 284, leucine 285–glutamate 305, isoleucine 306–proline 325, glycine 326–proline 346, glutamate 347–threonine 368, isoleucine 369–alanine 389, and leucine 390–phenylalanine 410. A linker region spans residues glycine 454–valine 461. The E3 ubiquitin-protein ligase catalytic domain stretch occupies residues threonine 462–arginine 765. The NEL domain maps to proline 464–serine 758. The active-site Glycyl thioester intermediate is cysteine 546.

This sequence belongs to the LRR-containing bacterial E3 ligase family. In terms of assembly, interacts with host TXN. Ubiquitinated in the presence of host E1 ubiquitin-activating enzyme, E2 ubiquitin-conjugating enzyme and ubiquitin.

The protein localises to the secreted. Its subcellular location is the host cytoplasm. It catalyses the reaction S-ubiquitinyl-[E2 ubiquitin-conjugating enzyme]-L-cysteine + [acceptor protein]-L-lysine = [E2 ubiquitin-conjugating enzyme]-L-cysteine + N(6)-ubiquitinyl-[acceptor protein]-L-lysine.. Its function is as follows. Effector proteins function to alter host cell physiology and promote bacterial survival in host tissues. This protein is an E3 ubiquitin ligase that interferes with host's ubiquitination pathway. Can ubiquitinate both ubiquitin and host TXN (thioredoxin). Leads to significant decrease of thioredoxin activity and increase of host cell death. The protein is E3 ubiquitin-protein ligase SlrP (slrP) of Salmonella typhimurium (strain 14028s / SGSC 2262).